A 279-amino-acid polypeptide reads, in one-letter code: ATP-dependent Clp protease proteolytic subunit-related protein 2, chloroplastic (279 aa).

Residues 1–54 (MAVSFNTTLHQPSLSPSCSIKLYSGLKPQSASFLASGYQNLNKEFYGRVYKSLQ) constitute a chloroplast transit peptide.

This sequence belongs to the peptidase S14 family. In terms of assembly, component of the chloroplastic Clp protease core complex which consist of at least 16 proteins: CLPP4 (3 copies), CLPP5 (3 copies), CLPR4 (2 copies), ClpP1 (1 copy), CLPP6 (1 copy), CLPR2 (1 copy), CLPT1 (1 copy), CLPT2 (1 copy) and 3 copies of CLPP3 and/or CLPR1 and/or CLPR3. The core complex is organized in two heptameric rings, one containing CLPP3,4,5,6 in a 1:2:3:1 ratio and the other CLPP1 and CLPR1,2,3,4 in a 3:1:1:1:1 ratio. As to expression, expressed at least in leaves and roots.

Its subcellular location is the plastid. It is found in the chloroplast. In terms of biological role, required for chloroplast development and integrity. Involved in the regulation of plastoglobules formation. The protein is ATP-dependent Clp protease proteolytic subunit-related protein 2, chloroplastic of Arabidopsis thaliana (Mouse-ear cress).